The sequence spans 428 residues: GTPase Obg (428 aa).

In terms of domain architecture, Obg spans 1–158 (MFVDQVKVYV…RYIVLELKVL (158 aa)). The interval 117 to 143 (ARGGRGGRGNSRFATPANPAPQLSENG) is disordered. Positions 159–329 (ADVGLVGFPS…LLFEVANQLE (171 aa)) constitute an OBG-type G domain. Residues 165–172 (GFPSVGKS), 190–194 (FTTLV), 212–215 (DLPG), 282–285 (NKMD), and 310–312 (SAV) each bind GTP. 2 residues coordinate Mg(2+): serine 172 and threonine 192. Residues 350-428 (TMENEEVPFN…LLEFEFEFID (79 aa)) form the OCT domain.

It belongs to the TRAFAC class OBG-HflX-like GTPase superfamily. OBG GTPase family. Monomer. Interacts with TasA (AC P54507) in pull-down experiments. Requires Mg(2+) as cofactor.

It is found in the cytoplasm. Inhibited by GDP; less than 20 uM ppGpp stimulates the GTPase, while higher concentrations inhibit. Its function is as follows. Necessary for the transition from vegetative growth to stage 0 or stage II of sporulation, but sporulation subsequent to these stages is unaffected at 45 degrees Celsius. This ts effect is probably due solely to the E-79 mutation. Required for expression of early sporulation genes, further suggesting a role in the induction of sporulation. Depletion effects on sporulation can be partially suppressed by missense mutations in spo0A. Strains depleted for obg stop growing after about 3 hours and do not induce the sigma-B factor following ethanol stress. It cofractionates with the ribosome and upstream stress response regulators RsbR, RsbS and RsbT in size fractionation columns, suggesting the ribosome might serve as a possible mediator of the activity of obg and the stress induction of sigma-B. In glycerol gradients partially associates with ribosomes; this is stabilized by a nonhydrolyzable GTP-analog and to a lesser extent GTP and GDP. In terms of biological role, an essential GTPase which binds GTP, GDP and possibly (p)ppGpp with moderate affinity, with high nucleotide exchange rates and a fairly low GTP hydrolysis rate. Plays a role in control of the cell cycle, stress response, ribosome biogenesis and in those bacteria that undergo differentiation, in morphogenesis control. In Bacillus subtilis (strain 168), this protein is GTPase Obg.